A 296-amino-acid chain; its full sequence is Bidirectional sugar transporter SWEET13 (296 aa).

The Extracellular portion of the chain corresponds to 1–9 (MAGLSLQHP). A helical membrane pass occupies residues 10–30 (WAFAFGLLGNLISFTTYLAPI). One can recognise a MtN3/slv 1 domain in the interval 13-98 (AFGLLGNLIS…VMYLAYAPKK (86 aa)). Topologically, residues 31–45 (PTFYRIYKSKSTEGF) are cytoplasmic. A helical membrane pass occupies residues 46–66 (QSVPYVVALFSAMLWIFYALI). The Extracellular portion of the chain corresponds to 67-71 (KSNEA). The chain crosses the membrane as a helical span at residues 72-92 (LLITINAAGCVIETIYIVMYL). Residues 93–105 (AYAPKKAKVFTTK) are Cytoplasmic-facing. The helical transmembrane segment at 106–126 (ILLLLNVGVFGVILLLTLLLS) threads the bilayer. At 127-133 (HGEQRVV) the chain is on the extracellular side. Residues 134-154 (SLGWVCVAFSVSVFVAPLSII) form a helical membrane-spanning segment. The 84-residue stretch at 134 to 217 (SLGWVCVAFS…MGLYVFYMNA (84 aa)) folds into the MtN3/slv 2 domain. At 155 to 167 (KRVIQSRSVEYMP) the chain is on the cytoplasmic side. The chain crosses the membrane as a helical span at residues 168–188 (FSLSLTLTLSAVVWFLYGLLI). Residues 189-192 (KDKY) lie on the Extracellular side of the membrane. The helical transmembrane segment at 193–213 (VALPNILGFTFGVVQMGLYVF) threads the bilayer. The Cytoplasmic segment spans residues 214 to 296 (YMNATPVAGE…PPRAVEVAAV (83 aa)).

It belongs to the SWEET sugar transporter family. As to quaternary structure, forms homooligomers and/or heterooligomers.

The protein localises to the cell membrane. In terms of biological role, mediates both low-affinity uptake and efflux of sugar across the plasma membrane. Functionally, confers blight susceptibility. Confers TAL effector-mediated susceptibility to Xanthomonas oryzae pv. oryzae. In Oryza sativa subsp. japonica (Rice), this protein is Bidirectional sugar transporter SWEET13 (SWEET13).